A 1826-amino-acid chain; its full sequence is Transcription initiation factor TFIID subunit 1-like (1826 aa).

Disordered stretches follow at residues 118-141, 532-555, and 1252-1276; these read DESQRHQQTMGSLQPLYHSDYDED, IPDEKEEATSNSPSKESKKESSLK, and RLKRNQEKEKLKGPPEKKPKKMKER. A compositionally biased stretch (basic and acidic residues) spans 1252-1268; it reads RLKRNQEKEKLKGPPEK. The Nuclear localization signal signature appears at 1370–1377; that stretch reads PPKKKRRV. Bromo domains follow at residues 1395–1503 and 1517–1626; these read RRRT…LKEK and LLDD…ITEY. Residues 1648–1826 are disordered; the sequence is AELESLDPMT…SGEHKDGHGK (179 aa). The span at 1660–1700 shows a compositional bias: polar residues; that stretch reads PYTSQPPDMYDTNTSLSTSRDASVFQDESNLSVLDISTATP. 3 stretches are compositionally biased toward acidic residues: residues 1714 to 1729, 1740 to 1750, and 1768 to 1783; these read EDSDVDVEGYDDEEED, GDGDLADEEEG, and EGEDDEEDAGSDEEGD. Residues 1787–1797 are compositionally biased toward polar residues; it reads SAIQLSESGSD. Residues 1817-1826 show a composition bias toward basic and acidic residues; sequence SGEHKDGHGK.

The protein belongs to the TAF1 family. Can bind directly to TATA-box binding protein (TBP). Interacts (via bromo domains) with acetylated lysine residues on the N-terminus of histone H1.4, H2A, H2B, H3 and H4 (in vitro). Testis specific, expressed apparently in germ cells.

It localises to the nucleus. Its function is as follows. May act as a functional substitute for TAF1/TAFII250 during male meiosis, when sex chromosomes are transcriptionally silenced. This Homo sapiens (Human) protein is Transcription initiation factor TFIID subunit 1-like (TAF1L).